Consider the following 478-residue polypeptide: GTPase Obg (478 aa).

The Obg domain maps to Thr-2 to Val-159. Residues His-61 to Leu-87 are disordered. Residues Ala-160–Ala-330 enclose the OBG-type G domain. Residues Gly-166–Ser-173, Phe-191–Val-195, Asp-212–Gly-215, Asn-282–Asp-285, and Ser-311–Ile-313 each bind GTP. Ser-173 and Thr-193 together coordinate Mg(2+). One can recognise an OCT domain in the interval Pro-348 to Pro-430. Residues Ala-436–Phe-478 are disordered. Residues Leu-439 to Ala-468 show a composition bias toward basic and acidic residues. Residues Glu-469–Phe-478 show a composition bias toward acidic residues.

The protein belongs to the TRAFAC class OBG-HflX-like GTPase superfamily. OBG GTPase family. Monomer. Mg(2+) is required as a cofactor.

It localises to the cytoplasm. Functionally, an essential GTPase which binds GTP, GDP and possibly (p)ppGpp with moderate affinity, with high nucleotide exchange rates and a fairly low GTP hydrolysis rate. Plays a role in control of the cell cycle, stress response, ribosome biogenesis and in those bacteria that undergo differentiation, in morphogenesis control. This chain is GTPase Obg, found in Streptomyces griseus subsp. griseus (strain JCM 4626 / CBS 651.72 / NBRC 13350 / KCC S-0626 / ISP 5235).